The chain runs to 274 residues: Transmembrane O-methyltransferase (274 aa).

Residues 14–34 (VGTMSPAIALAFLPLVVTLLV) traverse the membrane as a helical segment. S-adenosyl-L-methionine is bound by residues E120, 122 to 123 (GT), S128, E146, and S176.

Belongs to the class I-like SAM-binding methyltransferase superfamily. Cation-dependent O-methyltransferase family. As to quaternary structure, interacts with LHFPL5, PCDH15, TMC1, TMC2 and TMIE. Interacts directly with TMC1. The interaction of TOMT with TMC1 and TMC2 is required for the transportation of TMC1/2 into the stereocilia of hair cells.

Its subcellular location is the membrane. The protein localises to the cytoplasm. The protein resides in the endoplasmic reticulum. It carries out the reaction a catechol + S-adenosyl-L-methionine = a guaiacol + S-adenosyl-L-homocysteine + H(+). Its function is as follows. Catalyzes the O-methylation, and thereby the inactivation, of catecholamine neurotransmitters and catechol hormones. Required for auditory function. Component of the cochlear hair cell's mechanotransduction (MET) machinery. Involved in the assembly of the asymmetric tip-link MET complex. Required for transportation of TMC1 and TMC2 proteins into the mechanically sensitive stereocilia of the hair cells. The function in MET is independent of the enzymatic activity. The protein is Transmembrane O-methyltransferase of Propithecus coquereli (Coquerel's sifaka).